Consider the following 388-residue polypeptide: Flap endonuclease 1 (388 aa).

Residues 1 to 104 (MGILGLSKLI…GELAKRAERR (104 aa)) are N-domain. Asp-34 is a binding site for Mg(2+). Residues Arg-47 and Arg-70 each coordinate DNA. The Mg(2+) site is built by Asp-86, Glu-158, Glu-160, Asp-179, and Asp-181. Residues 122–253 (QIEKFNRRLV…KRAIELIKSY (132 aa)) are I-domain. Glu-158 provides a ligand contact to DNA. The DNA site is built by Gly-231 and Asp-233. Asp-233 is a Mg(2+) binding site. The tract at residues 336-344 (TQVRLDSFF) is interaction with PCNA. The tract at residues 355–388 (AAAKRKAEESKKSANSKKAKIGGGSGAGRGRRPK) is disordered.

It belongs to the XPG/RAD2 endonuclease family. FEN1 subfamily. Interacts with PCNA. Three molecules of FEN1 bind to one PCNA trimer with each molecule binding to one PCNA monomer. PCNA stimulates the nuclease activity without altering cleavage specificity. Mg(2+) is required as a cofactor. Phosphorylated. Phosphorylation upon DNA damage induces relocalization to the nuclear plasma.

Its subcellular location is the nucleus. The protein resides in the nucleolus. It is found in the nucleoplasm. It localises to the mitochondrion. Functionally, structure-specific nuclease with 5'-flap endonuclease and 5'-3' exonuclease activities involved in DNA replication and repair. During DNA replication, cleaves the 5'-overhanging flap structure that is generated by displacement synthesis when DNA polymerase encounters the 5'-end of a downstream Okazaki fragment. It enters the flap from the 5'-end and then tracks to cleave the flap base, leaving a nick for ligation. Also involved in the long patch base excision repair (LP-BER) pathway, by cleaving within the apurinic/apyrimidinic (AP) site-terminated flap. Acts as a genome stabilization factor that prevents flaps from equilibrating into structures that lead to duplications and deletions. Also possesses 5'-3' exonuclease activity on nicked or gapped double-stranded DNA, and exhibits RNase H activity. Also involved in replication and repair of rDNA and in repairing mitochondrial DNA. The chain is Flap endonuclease 1 from Drosophila grimshawi (Hawaiian fruit fly).